Consider the following 227-residue polypeptide: NADH-quinone oxidoreductase subunit C (227 aa).

This sequence belongs to the complex I 30 kDa subunit family. NDH-1 is composed of 14 different subunits. Subunits NuoB, C, D, E, F, and G constitute the peripheral sector of the complex.

The protein localises to the cell inner membrane. It catalyses the reaction a quinone + NADH + 5 H(+)(in) = a quinol + NAD(+) + 4 H(+)(out). Its function is as follows. NDH-1 shuttles electrons from NADH, via FMN and iron-sulfur (Fe-S) centers, to quinones in the respiratory chain. The immediate electron acceptor for the enzyme in this species is believed to be ubiquinone. Couples the redox reaction to proton translocation (for every two electrons transferred, four hydrogen ions are translocated across the cytoplasmic membrane), and thus conserves the redox energy in a proton gradient. The chain is NADH-quinone oxidoreductase subunit C from Legionella pneumophila subsp. pneumophila (strain Philadelphia 1 / ATCC 33152 / DSM 7513).